The following is a 484-amino-acid chain: Calcium uniporter protein, mitochondrial (484 aa).

The transit peptide at 1–33 (MGHVLGGTLLAANRLARPPAVVLGKPRVCCWRA) directs the protein to the mitochondrion. Topologically, residues 34–304 (SPWPVIVSSA…CDLLAHKGAH (271 aa)) are mitochondrial matrix. Disordered stretches follow at residues 59–104 (ARYE…KGRL) and 188–227 (YTGG…DTHW). The segment covering 61–82 (YEARGRSTTQRKVDDRPWHRES) has biased composition (basic and acidic residues). Residues 83 to 93 (SGSLPKSTSPD) show a composition bias toward polar residues. The helical transmembrane segment at 305-326 (ALAKGGFAALAAWWGIVYYVTF) threads the bilayer. Over 327-334 (HTDMGWDL) the chain is Mitochondrial intermembrane. The Selectivity filter motif lies at 332 to 340 (WDLVEPITY). The chain crosses the membrane as a helical span at residues 335–355 (VEPITYLAGLASIMGGYLWFL). Residue E336 participates in Ca(2+) binding. At 356–484 (FISRDLSYKA…NEAAANVPGD (129 aa)) the chain is on the mitochondrial matrix side. Basic and acidic residues-rich tracts occupy residues 426–435 (KEVLEEEKGG) and 452–462 (DHDHDHDHVSH). The disordered stretch occupies residues 426 to 484 (KEVLEEEKGGKARKREQEDEDGDGDDDHDHDHDHVSHGAELQGQDILHANEAAANVPGD).

Belongs to the MCU (TC 1.A.77) family. In terms of assembly, homotetramer, assembles in a dimer or dimers configuration with two interfaces.

It localises to the mitochondrion inner membrane. It catalyses the reaction Ca(2+)(in) = Ca(2+)(out). Inhibited by ruthenium red or its derivative Ru360. Its function is as follows. Highly selective calcium channel localized to the inner mitochondrial membrane, which mediates calcium uptake into the mitochondrial matrix. Mitochondrial calcium homeostasis plays key roles in cellular physiology and regulates ATP production, cytoplasmic calcium signals and activation of cell death pathways. Sufficient to operate as a pore-forming channel without the need of calcium-sensor or auxiliary subunit. The polypeptide is Calcium uniporter protein, mitochondrial (Metarhizium acridum (strain CQMa 102)).